Here is a 134-residue protein sequence, read N- to C-terminus: MTDKYKERRFDIYGYEKIDKEVLESIEYEYPEKNTIVEYITDEFSSVCPWTGLPDNAKLTIRYIPHKKLVELKSLKYYLTSYRNVGILQEHAINRILDDLVEFLQPKFMEIIGEFQERGGIATRIIARYEKEEY.

The active-site Thioimide intermediate is Cys48. The active-site Proton donor is Asp55. Residues 70 to 72 (VEL) and 89 to 90 (QE) contribute to the substrate site.

This sequence belongs to the GTP cyclohydrolase I family. QueF type 1 subfamily.

It is found in the cytoplasm. The enzyme catalyses 7-aminomethyl-7-carbaguanine + 2 NADP(+) = 7-cyano-7-deazaguanine + 2 NADPH + 3 H(+). Its pathway is tRNA modification; tRNA-queuosine biosynthesis. Catalyzes the NADPH-dependent reduction of 7-cyano-7-deazaguanine (preQ0) to 7-aminomethyl-7-deazaguanine (preQ1). The polypeptide is NADPH-dependent 7-cyano-7-deazaguanine reductase (Caldanaerobacter subterraneus subsp. tengcongensis (strain DSM 15242 / JCM 11007 / NBRC 100824 / MB4) (Thermoanaerobacter tengcongensis)).